The sequence spans 96 residues: MEVTDVRLRRVNTEGRMRAIASITLDGEFVVHDIRVIDGNNGLFVAMPSKRTPDGEFRDIAHPINSNHRGKIQDAVLAEYHRLGEVEVEFEEAGAS.

The protein belongs to the SpoVG family.

Essential for sporulation. Interferes with or is a negative regulator of the pathway leading to asymmetric septation. This chain is Putative septation protein SpoVG, found in Priestia megaterium (Bacillus megaterium).